Reading from the N-terminus, the 479-residue chain is Probable phosphatidate cytidylyltransferase (479 aa).

A compositionally biased stretch (basic and acidic residues) spans 1-28 (MRTDNIRNRKEQLKKQEKKDFDSSKDEE). Positions 1-71 (MRTDNIRNRK…NNNNNNNNIK (71 aa)) are disordered. Residues 1 to 108 (MRTDNIRNRK…LAIRSVMGAF (108 aa)) lie on the Cytoplasmic side of the membrane. Low complexity predominate over residues 53–69 (NKNIINQKTNNNNNNNN). The chain crosses the membrane as a helical span at residues 109 to 129 (MIGFFTIVLSTDHFIVALFVI). Topologically, residues 130–159 (ALQLLVFKEMIALRYIEAKEKKIPHFRTLN) are extracellular. Residues 160-180 (WFFLFTSFFFFYAKPILITLA) form a helical membrane-spanning segment. The Cytoplasmic portion of the chain corresponds to 181–192 (NYYPDIFQHFVR). The chain crosses the membrane as a helical span at residues 193–213 (YHLWHSFSLYCIGFVLFILTL). Topologically, residues 214–240 (RKGVYRYQFSQLTWTLMILMMVVVQSN) are extracellular. The helical transmembrane segment at 241-261 (FLISNIYQGLIWFILPVSIIV) threads the bilayer. Residues 262–293 (CNDIFAYFNGFFLGKKFINRPLMKISPNKTWE) lie on the Cytoplasmic side of the membrane. A helical membrane pass occupies residues 294–314 (GFIGATGWTLLFAYYFCGFLL). Over 315–375 (KYDWIVCPKG…FTYIPIQFHA (61 aa)) the chain is Extracellular. The chain crosses the membrane as a helical span at residues 376–396 (LVLALFGSLIAPFGGFFASGI). Over 397 to 479 (KRAYKVKDFD…IEFTTGTITA (83 aa)) the chain is Cytoplasmic.

It belongs to the CDS family.

The protein resides in the membrane. It carries out the reaction a 1,2-diacyl-sn-glycero-3-phosphate + CTP + H(+) = a CDP-1,2-diacyl-sn-glycerol + diphosphate. The protein operates within phospholipid metabolism; CDP-diacylglycerol biosynthesis; CDP-diacylglycerol from sn-glycerol 3-phosphate: step 3/3. The protein is Probable phosphatidate cytidylyltransferase (cdsA) of Dictyostelium discoideum (Social amoeba).